A 233-amino-acid chain; its full sequence is 7-cyano-7-deazaguanine synthase (233 aa).

7–17 lines the ATP pocket; the sequence is LSGGLDSAVTS. Zn(2+)-binding residues include Cys195, Cys206, Cys209, and Cys212.

Belongs to the QueC family. The cofactor is Zn(2+).

The enzyme catalyses 7-carboxy-7-deazaguanine + NH4(+) + ATP = 7-cyano-7-deazaguanine + ADP + phosphate + H2O + H(+). It functions in the pathway purine metabolism; 7-cyano-7-deazaguanine biosynthesis. Functionally, catalyzes the ATP-dependent conversion of 7-carboxy-7-deazaguanine (CDG) to 7-cyano-7-deazaguanine (preQ(0)). This Methanococcus maripaludis (strain C7 / ATCC BAA-1331) protein is 7-cyano-7-deazaguanine synthase.